Here is a 513-residue protein sequence, read N- to C-terminus: Histidine ammonia-lyase (513 aa).

Positions 144-146 (ASG) form a cross-link, 5-imidazolinone (Ala-Gly). 2,3-didehydroalanine (Ser) is present on serine 145.

It belongs to the PAL/histidase family. Contains an active site 4-methylidene-imidazol-5-one (MIO), which is formed autocatalytically by cyclization and dehydration of residues Ala-Ser-Gly.

Its subcellular location is the cytoplasm. The catalysed reaction is L-histidine = trans-urocanate + NH4(+). Its pathway is amino-acid degradation; L-histidine degradation into L-glutamate; N-formimidoyl-L-glutamate from L-histidine: step 1/3. The protein is Histidine ammonia-lyase of Streptococcus pyogenes serotype M49 (strain NZ131).